Reading from the N-terminus, the 443-residue chain is FLYWCH-type zinc finger-containing protein peb-1 (443 aa).

The disordered stretch occupies residues 22 to 49 (KPGSSDISSSSTDTSAISPISVSSMPLS). The segment covering 25-42 (SSDISSSSTDTSAISPIS) has biased composition (low complexity). The segment at residues 46–203 (MPLSPDKEKK…RNKDGKPKKP (158 aa)) is a DNA-binding region (required for DNA-binding). Residues 69–135 (IVTSFKGYQK…NACTKGSHNH (67 aa)) form an FLYWCH-type zinc finger. A disordered region spans residues 251 to 271 (PTIQIPQPIPTPIQHQQQEQS).

The protein localises to the nucleus. Functionally, putative transcription factor. Binds to specific sequence motif 5'-[TC][AGT]TGCC[GA][AT]-3' in regulatory elements of target genes such as myosin myo-2. May modulate gene expression, perhaps acting in opposition to transcription factor pha-4. Involved in morphogenesis, perhaps especially in formation of the pharynx. Plays roles in molting, feeding and morphology. This Caenorhabditis elegans protein is FLYWCH-type zinc finger-containing protein peb-1.